Consider the following 148-residue polypeptide: RING finger protein 24 (148 aa).

The chain crosses the membrane as a helical span at residues 24–44 (IYIVVFGTAIFVFILSLLFCC). An RING-type zinc finger spans residues 78-119 (CAVCLEDFKPRDELGICPCKHAFHRKCLIKWLEVRKVCPLCN).

Interacts with TRPC1, TRPC3, TRPC4, TRPC5, TRPC6 and TRPC7.

The protein localises to the golgi apparatus membrane. Functionally, may play a role in TRPCs intracellular trafficking. This Homo sapiens (Human) protein is RING finger protein 24 (RNF24).